An 863-amino-acid polypeptide reads, in one-letter code: DNA ligase (863 aa).

NAD(+) is bound by residues 76 to 80 (DAAYD), 125 to 126 (SL), and glutamate 159. Lysine 161 (N6-AMP-lysine intermediate) is an active-site residue. Arginine 182 and glutamate 221 together coordinate NAD(+). Positions 237–256 (EDAGRPPFANPRNAAAGSLR) are disordered. The segment covering 241–253 (RPPFANPRNAAAG) has biased composition (low complexity). NAD(+)-binding residues include lysine 346 and lysine 370. Zn(2+) is bound by residues cysteine 467, cysteine 470, cysteine 486, and cysteine 492. One can recognise a BRCT domain in the interval 781–863 (GLPQTLEGKS…DTLLATGDVQ (83 aa)).

It belongs to the NAD-dependent DNA ligase family. LigA subfamily. Requires Mg(2+) as cofactor. The cofactor is Mn(2+).

The catalysed reaction is NAD(+) + (deoxyribonucleotide)n-3'-hydroxyl + 5'-phospho-(deoxyribonucleotide)m = (deoxyribonucleotide)n+m + AMP + beta-nicotinamide D-nucleotide.. Functionally, DNA ligase that catalyzes the formation of phosphodiester linkages between 5'-phosphoryl and 3'-hydroxyl groups in double-stranded DNA using NAD as a coenzyme and as the energy source for the reaction. It is essential for DNA replication and repair of damaged DNA. The sequence is that of DNA ligase from Bifidobacterium animalis subsp. lactis (strain AD011).